Here is a 185-residue protein sequence, read N- to C-terminus: Ribosome-recycling factor (185 aa).

This sequence belongs to the RRF family.

Its subcellular location is the cytoplasm. Its function is as follows. Responsible for the release of ribosomes from messenger RNA at the termination of protein biosynthesis. May increase the efficiency of translation by recycling ribosomes from one round of translation to another. This chain is Ribosome-recycling factor, found in Hahella chejuensis (strain KCTC 2396).